We begin with the raw amino-acid sequence, 432 residues long: Adenylosuccinate synthetase (432 aa).

Residues 12–18 and 40–42 contribute to the GTP site; these read GDEGKGK and GHT. D13 acts as the Proton acceptor in catalysis. Positions 13 and 40 each coordinate Mg(2+). Residues 13-16, 38-41, T129, R143, Q224, T239, and R303 contribute to the IMP site; these read DEGK and NAGH. H41 (proton donor) is an active-site residue. Position 299–305 (299–305) interacts with substrate; the sequence is VTTGRRR. GTP contacts are provided by residues R305, 331-333, and 413-415; these read KLD and GVG.

The protein belongs to the adenylosuccinate synthetase family. Homodimer. It depends on Mg(2+) as a cofactor.

Its subcellular location is the cytoplasm. The catalysed reaction is IMP + L-aspartate + GTP = N(6)-(1,2-dicarboxyethyl)-AMP + GDP + phosphate + 2 H(+). It functions in the pathway purine metabolism; AMP biosynthesis via de novo pathway; AMP from IMP: step 1/2. Its function is as follows. Plays an important role in the de novo pathway of purine nucleotide biosynthesis. Catalyzes the first committed step in the biosynthesis of AMP from IMP. The sequence is that of Adenylosuccinate synthetase from Mycolicibacterium paratuberculosis (strain ATCC BAA-968 / K-10) (Mycobacterium paratuberculosis).